Here is a 512-residue protein sequence, read N- to C-terminus: Cytochrome P450 monooxygenase paxQ (512 aa).

2 helical membrane passes run phenylalanine 3 to isoleucine 23 and leucine 35 to leucine 55. Cysteine 453 provides a ligand contact to heme.

It belongs to the cytochrome P450 family. It depends on heme as a cofactor.

The protein resides in the membrane. It functions in the pathway secondary metabolite biosynthesis. In terms of biological role, cytochrome P450 monooxygenase; part of the gene cluster that mediates the biosynthesis of paxilline, a mycotoxin that acts as an inhibitor of mammalian maxi-K channels. PaxG, the geranylgeranyl diphosphate (GGPP) synthase is proposed to catalyze the first step in paxilline biosynthesis. Condensation of indole-3-glycerol phosphate with GGPP by paxC then forms 3-geranylgeranylindole (3-GGI), followed by epoxidation and cyclization of this intermediate (by paxM and paxB) to form paspaline. Paspaline is subsequently converted to 13-desoxypaxilline by paxP, the latter being then converted to paxilline by paxQ. Finally paxilline can be mono- and di-prenylated by paxD. PaxQ can also utilized beta-paxitriol and alpha-PC-M6 as substrates converting them to alpha-paxitriol. This chain is Cytochrome P450 monooxygenase paxQ, found in Penicillium paxilli.